A 176-amino-acid chain; its full sequence is ATP-dependent protease subunit HslV (176 aa).

The active site involves T5. Residues S161, C164, and T167 each coordinate Na(+).

This sequence belongs to the peptidase T1B family. HslV subfamily. In terms of assembly, a double ring-shaped homohexamer of HslV is capped on each side by a ring-shaped HslU homohexamer. The assembly of the HslU/HslV complex is dependent on binding of ATP.

It localises to the cytoplasm. The enzyme catalyses ATP-dependent cleavage of peptide bonds with broad specificity.. Its activity is regulated as follows. Allosterically activated by HslU binding. Functionally, protease subunit of a proteasome-like degradation complex believed to be a general protein degrading machinery. This chain is ATP-dependent protease subunit HslV, found in Desulfitobacterium hafniense (strain DSM 10664 / DCB-2).